A 444-amino-acid polypeptide reads, in one-letter code: Gamma-glutamyl phosphate reductase (444 aa).

The protein belongs to the gamma-glutamyl phosphate reductase family.

It is found in the cytoplasm. It carries out the reaction L-glutamate 5-semialdehyde + phosphate + NADP(+) = L-glutamyl 5-phosphate + NADPH + H(+). Its pathway is amino-acid biosynthesis; L-proline biosynthesis; L-glutamate 5-semialdehyde from L-glutamate: step 2/2. Catalyzes the NADPH-dependent reduction of L-glutamate 5-phosphate into L-glutamate 5-semialdehyde and phosphate. The product spontaneously undergoes cyclization to form 1-pyrroline-5-carboxylate. The sequence is that of Gamma-glutamyl phosphate reductase from Albidiferax ferrireducens (strain ATCC BAA-621 / DSM 15236 / T118) (Rhodoferax ferrireducens).